Consider the following 80-residue polypeptide: Defensin-like protein 18 (80 aa).

The N-terminal stretch at Met-1–Ala-29 is a signal peptide. 4 disulfides stabilise this stretch: Cys-32/Cys-80, Cys-43/Cys-64, Cys-49/Cys-74, and Cys-53/Cys-76.

The protein belongs to the DEFL family.

The protein localises to the secreted. In terms of biological role, confers broad-spectrum resistance to pathogens. This Arabidopsis thaliana (Mouse-ear cress) protein is Defensin-like protein 18 (PDF1.5).